A 976-amino-acid chain; its full sequence is Peptidylglycine alpha-amidating monooxygenase (976 aa).

A signal peptide spans 1–25 (MAGRARSGLLLLLLGLLALQSSCLA). A peptidylglycine alpha-hydroxylating monooxygenase region spans residues 1 to 497 (MAGRARSGLL…EGPWEPEPSG (497 aa)). Residues 26 to 35 (FRSPLSVFKR) constitute a propeptide that is removed on maturation. Residues 36 to 866 (FKETTRSFSN…QKLSTEPGSG (831 aa)) lie on the Intragranular side of the membrane. 5 cysteine pairs are disulfide-bonded: Cys-47/Cys-186, Cys-81/Cys-126, Cys-114/Cys-131, Cys-227/Cys-334, and Cys-293/Cys-315. 2 residues coordinate Cu(2+): His-107 and His-108. His-172, His-242, His-244, and Met-314 together coordinate Cu(2+). Residues 498–820 (DFHVEEELDW…LTEKMEHRSV (323 aa)) form a peptidyl-alpha-hydroxyglycine alpha-amidating lyase region. NHL repeat units lie at residues 501–544 (VEEE…NSFD), 570–611 (AEIL…LDPH), 620–665 (LGRS…FSPS), and 673–717 (GEES…FKTD). Residue Val-520 participates in Ca(2+) binding. A protein is bound at residue Arg-533. His-585 serves as a coordination point for Zn(2+). Leu-587 serves as a coordination point for Ca(2+). The cysteines at positions 634 and 655 are disulfide-linked. Tyr-654 contacts a protein. His-690 is a binding site for Zn(2+). Cysteines 702 and 713 form a disulfide. Arg-706 is a binding site for a protein. Asn-765 carries an N-linked (GlcNAc...) asparagine glycan. The NHL 5 repeat unit spans residues 769-812 (GEIIDVFKPVRKHFDMPHDIVASEDGTVYIGDAHTNTVWKFTLT). The residue at position 774 (Val-774) is a Sulfotyrosine. Residue His-786 participates in Zn(2+) binding. Asp-787 is a Ca(2+) binding site. At Glu-792 the chain carries Sulfotyrosine. A helical membrane pass occupies residues 867–890 (VSVVLITTLLVIPVLVLLAIVMFI). Residues 891-976 (RWKKSRAFGD…APLPKPAPSS (86 aa)) are Cytoplasmic-facing. Residues Ser-921, Ser-932, and Ser-945 each carry the phosphoserine modification. The interaction with RASSF9 stretch occupies residues 928 to 945 (NFFASRKGYSRKGFDRVS). The tract at residues 940 to 976 (GFDRVSTEGSDQEKDEDDGTESEEEYSAPLPKPAPSS) is disordered. Thr-946 is subject to Phosphothreonine. Ser-949 is subject to Phosphoserine. Over residues 952 to 965 (EKDEDDGTESEEEY) the composition is skewed to acidic residues. Thr-959 carries the phosphothreonine modification. Ser-961 is modified (phosphoserine).

The protein in the C-terminal section; belongs to the peptidyl-alpha-hydroxyglycine alpha-amidating lyase family. In the N-terminal section; belongs to the copper type II ascorbate-dependent monooxygenase family. Monomer. Interacts with RASSF9. Requires Zn(2+) as cofactor. Cu(2+) is required as a cofactor.

It is found in the cytoplasmic vesicle. The protein resides in the secretory vesicle membrane. The protein localises to the membrane. Its subcellular location is the secreted. It catalyses the reaction a [peptide]-C-terminal glycine + 2 L-ascorbate + O2 = a [peptide]-C-terminal (2S)-2-hydroxyglycine + 2 monodehydro-L-ascorbate radical + H2O. The enzyme catalyses a [peptide]-C-terminal (2S)-2-hydroxyglycine = a [peptide]-C-terminal amide + glyoxylate. The catalysed reaction is N-dodecanoylglycine + 2 L-ascorbate + O2 = N-dodecanoyl-(2S)-hydroxyglycine + 2 monodehydro-L-ascorbate radical + H2O. It carries out the reaction N-dodecanoyl-(2S)-hydroxyglycine = dodecanamide + glyoxylate. It catalyses the reaction N-(9Z,12Z,15Z)-octadecatrienoylglycine + 2 L-ascorbate + O2 = N-(9Z,12Z,15Z)-octadecatrienoyl-(2S)-hydroxyglycine + 2 monodehydro-L-ascorbate radical + H2O. The enzyme catalyses N-(9Z,12Z,15Z)-octadecatrienoyl-(2S)-hydroxyglycine = (9Z,12Z,15Z)-octadecatrienamide + glyoxylate. The catalysed reaction is N-(9Z-octadecenoyl)glycine + 2 L-ascorbate + O2 = N-(9Z-octadecenoyl)-(2S)-hydroxyglycine + 2 monodehydro-L-ascorbate radical + H2O. It carries out the reaction N-(9Z-octadecenoyl)-(2S)-hydroxyglycine = (9Z)-octadecenamide + glyoxylate. It catalyses the reaction N-tetradecanoylglycine + 2 L-ascorbate + O2 = N-tetradecanoyl-(2S)-hydroxyglycine + 2 monodehydro-L-ascorbate radical + H2O. The enzyme catalyses N-tetradecanoyl-(2S)-hydroxyglycine = tetradecamide + glyoxylate. The catalysed reaction is N-decanoylglycine + 2 L-ascorbate + O2 = N-decanoyl-(2S)-hydroxyglycine + 2 monodehydro-L-ascorbate radical + H2O. It carries out the reaction N-decanoyl-(2S)-hydroxyglycine = decanamide + glyoxylate. It catalyses the reaction N-octanoylglycine + 2 L-ascorbate + O2 = N-octanoyl-(2S)-hydroxyglycine + 2 monodehydro-L-ascorbate radical + H2O. The enzyme catalyses N-octanoyl-(2S)-hydroxyglycine = octanamide + glyoxylate. With respect to regulation, PAM activity is inhibited by EDTA, phenylglyoxal and diethyl pyrocarbonate. PAL activity is stimulated by cadmium and inhibited by mercury. Its function is as follows. Bifunctional enzyme that catalyzes amidation of the C-terminus of proteins. Alpha-amidation is present at the C-terminus of many endocrine hormones and neuropeptides and is required for their activity. C-terminal amidation also takes place in response to protein fragmentation triggered by oxidative stress, promoting degradation of amidated protein fragments by the proteasome. Alpha-amidation involves two sequential reactions, both of which are catalyzed by separate catalytic domains of the enzyme. The first step, catalyzed by peptidyl alpha-hydroxylating monooxygenase (PHM) domain, is the copper-, ascorbate-, and O2- dependent stereospecific hydroxylation (with S stereochemistry) at the alpha-carbon (C-alpha) of the C-terminal glycine of the peptidylglycine substrate. The second step, catalyzed by the peptidylglycine amidoglycolate lyase (PAL) domain, is the zinc-dependent cleavage of the N-C-alpha bond, producing the alpha-amidated peptide and glyoxylate. Similarly, catalyzes the two-step conversion of an N-fatty acylglycine to a primary fatty acid amide and glyoxylate. This is Peptidylglycine alpha-amidating monooxygenase from Rattus norvegicus (Rat).